A 418-amino-acid chain; its full sequence is E3 ubiquitin-protein ligase pellino homolog 1 (418 aa).

Positions 13–200 constitute an FHA; atypical domain; sequence APVKYGELIV…MHPRNGFTED (188 aa). Ser121 bears the Phosphoserine mark. Phosphothreonine is present on Thr127. Positions 311–399 are ring-like domain; necessary for ubiquitination of RIPK3; that stretch reads CGHVHGYHNW…TFHAACPFCA (89 aa).

Belongs to the pellino family. In terms of assembly, interacts with MAP3K7. Upon IL1B treatment, forms a complex with TRAF6, IRAK1, IRAK4 and MYD88; this complex recruits MAP3K7/TAK1, TAB1 and TAB2 to mediate NF-kappa-B activation. Direct binding of SMAD6 to PELI1 prevents the complex formation and hence negatively regulates IL1R-TLR signaling and eventually NF-kappa-B-mediated gene expression. Interacts (via atypical FHA domain) with RIPK3. Binds preferentially to the 'Thr-182' phosphorylated form of RIPK3. Interacts with RIPK1. Phosphorylation by IRAK1 and IRAK4 enhances its E3 ligase activity. Phosphorylated by ATM in response to DNA damage, promoting localization to DNA double-strand breaks (DSBs) and ability to mediate 'Lys-63'-linked ubiquitination of NBN. Post-translationally, sumoylated.

It localises to the chromosome. The catalysed reaction is S-ubiquitinyl-[E2 ubiquitin-conjugating enzyme]-L-cysteine + [acceptor protein]-L-lysine = [E2 ubiquitin-conjugating enzyme]-L-cysteine + N(6)-ubiquitinyl-[acceptor protein]-L-lysine.. It participates in protein modification; protein ubiquitination. E3 ubiquitin ligase catalyzing the covalent attachment of ubiquitin moieties onto substrate proteins. Involved in the TLR and IL-1 signaling pathways via interaction with the complex containing IRAK kinases and TRAF6. Acts as a positive regulator of inflammatory response in microglia through activation of NF-kappa-B and MAP kinase. Mediates 'Lys-63'-linked polyubiquitination of IRAK1 allowing subsequent NF-kappa-B activation. Conjugates 'Lys-63'-linked ubiquitin chains to the adapter protein ASC/PYCARD, which in turn is crucial for NLRP3 inflammasome activation. Mediates 'Lys-48'-linked polyubiquitination of RIPK3 leading to its subsequent proteasome-dependent degradation; preferentially recognizes and mediates the degradation of the 'Thr-182' phosphorylated form of RIPK3. Negatively regulates necroptosis by reducing RIPK3 expression. Mediates 'Lys-63'-linked ubiquitination of RIPK1. Following phosphorylation by ATM, catalyzes 'Lys-63'-linked ubiquitination of NBN, promoting DNA repair via homologous recombination. Negatively regulates activation of the metabolic mTORC1 signaling pathway by mediating 'Lys-63'-linked ubiquitination of mTORC1-inhibitory protein TSC1 and thereby promoting TSC1/TSC2 complex stability. The protein is E3 ubiquitin-protein ligase pellino homolog 1 (Peli1) of Mus musculus (Mouse).